Consider the following 92-residue polypeptide: YcgL domain-containing protein VC_1957 (92 aa).

The YcgL domain maps to 1–84; it reads MLCSIYKSPK…PPENLLEQHK (84 aa). The tract at residues 69–92 is disordered; the sequence is FLQLPPPPENLLEQHKERKARQTP.

This Vibrio cholerae serotype O1 (strain ATCC 39315 / El Tor Inaba N16961) protein is YcgL domain-containing protein VC_1957.